The following is a 179-amino-acid chain: Bifunctional protein PyrR (179 aa).

Substrate contacts are provided by residues 39–40, 101–109, R134, and V158; these read RR and DDVLFTGRT. The PRPP-binding motif lies at 97 to 109; sequence VILIDDVLFTGRT.

It belongs to the purine/pyrimidine phosphoribosyltransferase family. PyrR subfamily.

It carries out the reaction UMP + diphosphate = 5-phospho-alpha-D-ribose 1-diphosphate + uracil. Functionally, regulates the transcription of the pyrimidine nucleotide (pyr) operon in response to exogenous pyrimidines. In terms of biological role, also displays a weak uracil phosphoribosyltransferase activity which is not physiologically significant. This Haemophilus ducreyi (strain 35000HP / ATCC 700724) protein is Bifunctional protein PyrR.